A 120-amino-acid polypeptide reads, in one-letter code: Large ribosomal subunit protein P3y (120 aa).

Gly residues predominate over residues 81–92 (GGAAAGGGGGGE). Positions 81–120 (GGAAAGGGGGGEAAAATKEEEKKKEESEEEEGDFGFDLFG) are disordered. Over residues 97-106 (TKEEEKKKEE) the composition is skewed to basic and acidic residues.

The protein belongs to the eukaryotic ribosomal protein P1/P2 family.

Plays an important role in the elongation step of protein synthesis. This Arabidopsis thaliana (Mouse-ear cress) protein is Large ribosomal subunit protein P3y (RPP3B).